A 166-amino-acid chain; its full sequence is Transcription antitermination protein NusB (166 aa).

It belongs to the NusB family.

Functionally, involved in transcription antitermination. Required for transcription of ribosomal RNA (rRNA) genes. Binds specifically to the boxA antiterminator sequence of the ribosomal RNA (rrn) operons. This is Transcription antitermination protein NusB from Chromohalobacter salexigens (strain ATCC BAA-138 / DSM 3043 / CIP 106854 / NCIMB 13768 / 1H11).